Consider the following 325-residue polypeptide: Aminotransferase tasG (325 aa).

Gly35 serves as a coordination point for substrate. Residues Thr89 to Trp90, Asn143, Tyr174, and Ser203 to Ala205 each bind pyridoxal 5'-phosphate. Residue Asn143 participates in substrate binding. At Lys206 the chain carries N6-(pyridoxal phosphate)lysine. Position 214 (Arg214) interacts with pyridoxal 5'-phosphate.

The protein belongs to the class-I pyridoxal-phosphate-dependent aminotransferase family. In terms of assembly, homodimer. Pyridoxal 5'-phosphate serves as cofactor.

Its pathway is secondary metabolite biosynthesis. Its function is as follows. Aminotransferase; part of the gene cluster that mediates the biosynthesis of the tetramic acids Sch210971 and Sch210972, potential anti-HIV fungal natural product that contain a decalin core. The PKS module of tasS together with the enoylreductase tasC catalyze the formation of the polyketide unit which is then conjugated to 4-hydroxyl-4-methyl glutamate (HMG) by the condensation domain of the tasS NRPS module. One unique structural feature of Sch210971 and Sch210972 is the tetramic acid motif proposed to be derived from the non-proteinogenic amino acid HMG, by a Dieckmann-type condensation catalyzed by the reductase domain of tasS. The aldolase tasA catalyzes the aldol condensation of 2 molecules of pyruvic acid to yield the intermediate 4-hydroxyl-4-methyl-2-oxoglutarate (HMOG), which can then be stereoselectively transaminated, may be by tasG, to form HMG. The Diels-Alderase tas3 then uses the Dieckmann product of tasS as substrate and catalyzes the Diels-Alder cycloaddition to form the decalin ring of Sch210971 and Sch210972. In Hapsidospora irregularis, this protein is Aminotransferase tasG.